A 532-amino-acid polypeptide reads, in one-letter code: ATP-dependent RNA helicase DBP3 (532 aa).

Residues 1 to 78 form a disordered region; sequence MGKRDRTEDD…EVAEEKPKMT (78 aa). Residues 15–58 are compositionally biased toward basic residues; that stretch reads KKVKLDKKDKKEKKEKKDKKDKKDKKDKKDKKDKKEKKEKKEKK. The Q motif signature appears at 126-152; the sequence is MEFSHVTLDPRITKVLTKFPRPTPIQA. The 173-residue stretch at 155–327 folds into the Helicase ATP-binding domain; it reads WPYLLAGKDM…EGFMKTPTKV (173 aa). 168 to 175 contacts ATP; it reads AETGSGKT. Positions 274 to 277 match the DEAD box motif; it reads DEAD. One can recognise a Helicase C-terminal domain in the interval 356 to 502; it reads RLLDLLRQYA…PVPDELLKFG (147 aa).

The protein belongs to the DEAD box helicase family. DDX5/DBP2 subfamily.

Its subcellular location is the nucleus. It is found in the nucleolus. It carries out the reaction ATP + H2O = ADP + phosphate + H(+). Functionally, ATP-dependent RNA helicase required for 60S ribosomal subunit synthesis. Involved in efficient pre-rRNA processing, predominantly at site A3, which is necessary for the normal formation of 25S and 5.8S rRNAs. This chain is ATP-dependent RNA helicase DBP3 (DBP3), found in Yarrowia lipolytica (strain CLIB 122 / E 150) (Yeast).